The following is a 690-amino-acid chain: Glycine--tRNA ligase beta subunit (690 aa).

Belongs to the class-II aminoacyl-tRNA synthetase family. In terms of assembly, tetramer of two alpha and two beta subunits.

Its subcellular location is the cytoplasm. It catalyses the reaction tRNA(Gly) + glycine + ATP = glycyl-tRNA(Gly) + AMP + diphosphate. The protein is Glycine--tRNA ligase beta subunit of Buchnera aphidicola subsp. Acyrthosiphon pisum (strain Tuc7).